The chain runs to 132 residues: uncharacterized protein (132 aa).

This is an uncharacterized protein from Methanocaldococcus jannaschii (strain ATCC 43067 / DSM 2661 / JAL-1 / JCM 10045 / NBRC 100440) (Methanococcus jannaschii).